A 566-amino-acid polypeptide reads, in one-letter code: Chaperone ric-8 (566 aa).

This sequence belongs to the synembryn family. Interacts with GDP-bound G-alpha proteins goa-1 and gpa-16. Does not interact with G-alpha proteins when they are in complex with subunits beta and gamma. Present throughout the nervous system in juveniles and adults (at protein level).

Its subcellular location is the cytoplasm. It localises to the cell cortex. Functionally, chaperone that specifically binds and folds some, but not all, nascent G alpha proteins prior to G protein heterotrimer formation, promoting their stability and activity. Also acts as a guanine nucleotide exchange factor (GEF) for G alpha proteins by stimulating exchange of bound GDP for free GTP. Able to facilitate synaptic transmission in the nervous system probably by activating G(q)-alpha (egl-30). Also able to activate the G(s)-alpha in synaptic signaling network. Plays a key role in asymmetric spindle positioning, a step for asymmetric cell division that generates cell diversity during development by activating G(i)-alpha protein goa-1 and gpa-16 independently of G-protein coupled receptors. While it acts as a GEF for goa-1, it has no GEF activity toward gpa-16. In addition to its GEF activity, it is required for cortical subcellular localization of G-alpha proteins such as gpa-16. Also required for the interaction of goa-1 and gpr-1/2, suggesting that it may act by generating G-alpha proteins free from G-beta-gamma subunits, enabling gpr-1/2 to mediate asymmetric cell division. The protein is Chaperone ric-8 (ric-8) of Caenorhabditis elegans.